Here is a 141-residue protein sequence, read N- to C-terminus: Large ribosomal subunit protein uL22 (141 aa).

The interval 108-141 (KSEEKKTVAKKTTTTKAPAKKTTSTKKATVKKES) is disordered. The span at 117 to 134 (KKTTTTKAPAKKTTSTKK) shows a compositional bias: low complexity.

This sequence belongs to the universal ribosomal protein uL22 family. As to quaternary structure, part of the 50S ribosomal subunit.

In terms of biological role, this protein binds specifically to 23S rRNA; its binding is stimulated by other ribosomal proteins, e.g. L4, L17, and L20. It is important during the early stages of 50S assembly. It makes multiple contacts with different domains of the 23S rRNA in the assembled 50S subunit and ribosome. Functionally, the globular domain of the protein is located near the polypeptide exit tunnel on the outside of the subunit, while an extended beta-hairpin is found that lines the wall of the exit tunnel in the center of the 70S ribosome. This is Large ribosomal subunit protein uL22 from Campylobacter jejuni subsp. jejuni serotype O:2 (strain ATCC 700819 / NCTC 11168).